A 169-amino-acid chain; its full sequence is Ribosomal RNA large subunit methyltransferase H (169 aa).

Residues Leu85, Gly117, and Leu136–Trp141 each bind S-adenosyl-L-methionine.

It belongs to the RNA methyltransferase RlmH family. As to quaternary structure, homodimer.

It localises to the cytoplasm. It carries out the reaction pseudouridine(1915) in 23S rRNA + S-adenosyl-L-methionine = N(3)-methylpseudouridine(1915) in 23S rRNA + S-adenosyl-L-homocysteine + H(+). Functionally, specifically methylates the pseudouridine at position 1915 (m3Psi1915) in 23S rRNA. In Brucella abortus biovar 1 (strain 9-941), this protein is Ribosomal RNA large subunit methyltransferase H.